Here is a 701-residue protein sequence, read N- to C-terminus: Transcriptional regulator Kaiso (701 aa).

The BTB domain occupies 32–94 (CDVTVIVEDR…IYSSKIVRVR (63 aa)). 2 disordered regions span residues 128–158 (GAGGKDGGTDAPSNPDHKAPEPQKSSDSPLP) and 181–311 (SSDD…QNQH). The segment covering 245–258 (TPSSQVQLTQNSLP) has biased composition (polar residues). The span at 259–273 (TNQQSSKNTSSTTQK) shows a compositional bias: low complexity. Polar residues predominate over residues 278–311 (VNANISKNPTPAANGFLSPTAQKQGTPNAVQNQH). The required for methylation dependent DNA-binding stretch occupies residues 470–609 (AKLDLDGLPN…QIRQYAYVNN (140 aa)). 3 C2H2-type zinc fingers span residues 501–523 (YICIVCKRSYVCLTSLRRHFNVH), 529–551 (YPCRYCERVFPLAEYRTKHEIHH), and 557–580 (YQCLTCGSSFINYQVMASHIRSVH). The segment at 519 to 701 (HFNVHSWEKK…EFEFVIPESY (183 aa)) is required for sequence specific DNA-binding. The tract at residues 644–664 (DIDPDEPQQPASEGNHANSAT) is disordered. The segment covering 652 to 664 (QPASEGNHANSAT) has biased composition (polar residues).

As to quaternary structure, self associates. Interacts with tcf7l1-A, leading to repression of tcf7l1-A target genes. Interacts with ctnnd1, and this interaction may inhibit DNA-binding. Interacts with ncor1.

The protein resides in the nucleus. Functionally, transcriptional regulator with bimodal DNA-binding specificity. Binds to methylated CpG dinucleotides in the consensus sequence 5'-CGCG-3' and also binds to the non-methylated consensus sequence 5'-CTGCNA-3'. May recruit the N-CoR repressor complex to promote histone deacetylation and the formation of repressive chromatin structures in target gene promoters. Contributes to the repression of target genes of the Wnt signaling pathway and to the methylation-dependent repression of zygotic transcription prior to the mid-blastula transition (MBT). Also required for gastrulation movements. This chain is Transcriptional regulator Kaiso (zbtb33), found in Xenopus laevis (African clawed frog).